Reading from the N-terminus, the 543-residue chain is Chaperonin GroEL (543 aa).

ATP is bound by residues 31 to 34 (TMGP), 88 to 92 (DGTTT), G415, 479 to 481 (DAL), and D495.

It belongs to the chaperonin (HSP60) family. Forms a cylinder of 14 subunits composed of two heptameric rings stacked back-to-back. Interacts with the co-chaperonin GroES.

It is found in the cytoplasm. The enzyme catalyses ATP + H2O + a folded polypeptide = ADP + phosphate + an unfolded polypeptide.. Its function is as follows. Together with its co-chaperonin GroES, plays an essential role in assisting protein folding. The GroEL-GroES system forms a nano-cage that allows encapsulation of the non-native substrate proteins and provides a physical environment optimized to promote and accelerate protein folding. This Clostridium tetani (strain Massachusetts / E88) protein is Chaperonin GroEL.